We begin with the raw amino-acid sequence, 476 residues long: Aspartyl/glutamyl-tRNA(Asn/Gln) amidotransferase subunit B (476 aa).

This sequence belongs to the GatB/GatE family. GatB subfamily. In terms of assembly, heterotrimer of A, B and C subunits.

It catalyses the reaction L-glutamyl-tRNA(Gln) + L-glutamine + ATP + H2O = L-glutaminyl-tRNA(Gln) + L-glutamate + ADP + phosphate + H(+). The enzyme catalyses L-aspartyl-tRNA(Asn) + L-glutamine + ATP + H2O = L-asparaginyl-tRNA(Asn) + L-glutamate + ADP + phosphate + 2 H(+). Its function is as follows. Allows the formation of correctly charged Asn-tRNA(Asn) or Gln-tRNA(Gln) through the transamidation of misacylated Asp-tRNA(Asn) or Glu-tRNA(Gln) in organisms which lack either or both of asparaginyl-tRNA or glutaminyl-tRNA synthetases. The reaction takes place in the presence of glutamine and ATP through an activated phospho-Asp-tRNA(Asn) or phospho-Glu-tRNA(Gln). In Clostridium botulinum (strain Eklund 17B / Type B), this protein is Aspartyl/glutamyl-tRNA(Asn/Gln) amidotransferase subunit B.